We begin with the raw amino-acid sequence, 224 residues long: Probable Brix domain-containing ribosomal biogenesis protein (224 aa).

Positions 1 to 196 constitute a Brix domain; that stretch reads MMLITTSHRP…IWIMEDGRRW (196 aa).

Its function is as follows. Probably involved in the biogenesis of the ribosome. The sequence is that of Probable Brix domain-containing ribosomal biogenesis protein from Pyrococcus horikoshii (strain ATCC 700860 / DSM 12428 / JCM 9974 / NBRC 100139 / OT-3).